A 248-amino-acid chain; its full sequence is Triosephosphate isomerase (248 aa).

Asparagine 10 and lysine 12 together coordinate substrate. Histidine 95 acts as the Electrophile in catalysis. Residue glutamate 165 is the Proton acceptor of the active site.

It belongs to the triosephosphate isomerase family. In terms of assembly, homodimer.

The catalysed reaction is D-glyceraldehyde 3-phosphate = dihydroxyacetone phosphate. The protein operates within carbohydrate biosynthesis; gluconeogenesis. It functions in the pathway carbohydrate degradation; glycolysis; D-glyceraldehyde 3-phosphate from glycerone phosphate: step 1/1. The chain is Triosephosphate isomerase (TPI1) from Kluyveromyces lactis (strain ATCC 8585 / CBS 2359 / DSM 70799 / NBRC 1267 / NRRL Y-1140 / WM37) (Yeast).